A 451-amino-acid polypeptide reads, in one-letter code: UDP-N-acetylmuramoylalanine--D-glutamate ligase (451 aa).

Glycine 118–threonine 124 lines the ATP pocket.

The protein belongs to the MurCDEF family.

It localises to the cytoplasm. The catalysed reaction is UDP-N-acetyl-alpha-D-muramoyl-L-alanine + D-glutamate + ATP = UDP-N-acetyl-alpha-D-muramoyl-L-alanyl-D-glutamate + ADP + phosphate + H(+). It participates in cell wall biogenesis; peptidoglycan biosynthesis. Its function is as follows. Cell wall formation. Catalyzes the addition of glutamate to the nucleotide precursor UDP-N-acetylmuramoyl-L-alanine (UMA). In Shouchella clausii (strain KSM-K16) (Alkalihalobacillus clausii), this protein is UDP-N-acetylmuramoylalanine--D-glutamate ligase.